We begin with the raw amino-acid sequence, 346 residues long: Protein RecA (346 aa).

Residue 65–72 coordinates ATP; it reads GPESSGKT.

This sequence belongs to the RecA family.

The protein localises to the cytoplasm. Can catalyze the hydrolysis of ATP in the presence of single-stranded DNA, the ATP-dependent uptake of single-stranded DNA by duplex DNA, and the ATP-dependent hybridization of homologous single-stranded DNAs. It interacts with LexA causing its activation and leading to its autocatalytic cleavage. The protein is Protein RecA of Pseudomonas aeruginosa (strain UCBPP-PA14).